Here is a 498-residue protein sequence, read N- to C-terminus: Cytochrome P450 monooxygenase ltmP (498 aa).

The N-terminal stretch at 1–21 is a signal peptide; the sequence is MLMLHAVPVGICLLLWYVVYG. An N-linked (GlcNAc...) asparagine glycan is attached at N420. C435 serves as a coordination point for heme.

Belongs to the cytochrome P450 family. Requires heme as cofactor.

Its pathway is secondary metabolite biosynthesis. In terms of biological role, cytochrome P450 monooxygenase; part of the gene clusters that mediates the biosynthesis of lolitrems, indole-diterpene mycotoxins that are potent tremorgens in mammals, and are synthesized by clavicipitaceous fungal endophytes in association with their grass hosts. The geranylgeranyl diphosphate (GGPP) synthase ltmG is proposed to catalyze the first step in lolitrem biosynthesis. LtmG catalyzes a series of iterative condensations of isopentenyl diphosphate (IPP) with dimethylallyl diphosphate (DMAPP), geranyl diphosphate (GPP), and farnesyl diphosphate (FPP), to form GGPP. GGPP then condenses with indole-3-glycerol phosphate to form 3-geranylgeranylindole, an acyclic intermediate, to be incorporated into paxilline. Either ltmG or ltmC could be responsible for this step, as both are putative prenyl transferases. The FAD-dependent monooxygenase ltmM then catalyzes the epoxidation of the two terminal alkenes of the geranylgeranyl moiety, which is subsequently cyclized by ltmB, to paspaline. The cytochrome P450 monooxygenases ltmQ and ltmP can sequentially oxidize paspaline to terpendole E and terpendole F. Alternatively, ltmP converts paspaline to an intermediate which is oxidized by ltmQ to terpendole F. LtmF, ltmK, ltmE and ltmJ appear to be unique to the epichloe endophytes. The prenyltransferase ltmF is involved in the 27-hydroxyl-O-prenylation. The cytochrome P450 monooxygenase ltmK is required for the oxidative acetal ring formation. The multi-functional prenyltransferase ltmE is required for C20- and C21-prenylations of the indole ring of paspalanes and acts together with the cytochrome P450 monooxygenase ltmJ to yield lolitremanes by multiple oxidations and ring closures. The stereoisomer pairs of lolitriol and lolitrem N or lolitrem B and lolitrem F may be attributed to variations in the way in which ring closure can occur under the action of ltmJ. While the major product of this pathway is lolitrem B, the prenyl transferases and cytochrome P450 monooxygenases identified in this pathway have a remarkable versatility in their regio- and stereo-specificities to generate a diverse range of metabolites that are products of a metabolic grid rather than a linear pathway. In Epichloe festucae var. lolii (Neotyphodium lolii), this protein is Cytochrome P450 monooxygenase ltmP.